The following is a 53-amino-acid chain: MTKTPFKTKYGQGSKVCKRCGRKGPGIIRKYGLNLCRQCFRELAPKLGFKKYD.

Positions 17, 20, 36, and 39 each coordinate Zn(2+).

Belongs to the universal ribosomal protein uS14 family. Zinc-binding uS14 subfamily. As to quaternary structure, part of the 30S ribosomal subunit. Zn(2+) serves as cofactor.

In terms of biological role, binds 16S rRNA, required for the assembly of 30S particles. In Methanococcus maripaludis (strain DSM 14266 / JCM 13030 / NBRC 101832 / S2 / LL), this protein is Small ribosomal subunit protein uS14.